The primary structure comprises 145 residues: D-aminoacyl-tRNA deacylase (145 aa).

The short motif at glycine 137–proline 138 is the Gly-cisPro motif, important for rejection of L-amino acids element.

The protein belongs to the DTD family. Homodimer.

The protein localises to the cytoplasm. It carries out the reaction glycyl-tRNA(Ala) + H2O = tRNA(Ala) + glycine + H(+). The catalysed reaction is a D-aminoacyl-tRNA + H2O = a tRNA + a D-alpha-amino acid + H(+). Its function is as follows. An aminoacyl-tRNA editing enzyme that deacylates mischarged D-aminoacyl-tRNAs. Also deacylates mischarged glycyl-tRNA(Ala), protecting cells against glycine mischarging by AlaRS. Acts via tRNA-based rather than protein-based catalysis; rejects L-amino acids rather than detecting D-amino acids in the active site. By recycling D-aminoacyl-tRNA to D-amino acids and free tRNA molecules, this enzyme counteracts the toxicity associated with the formation of D-aminoacyl-tRNA entities in vivo and helps enforce protein L-homochirality. The protein is D-aminoacyl-tRNA deacylase of Idiomarina loihiensis (strain ATCC BAA-735 / DSM 15497 / L2-TR).